Here is an 88-residue protein sequence, read N- to C-terminus: Small ribosomal subunit protein uS15 (88 aa).

This sequence belongs to the universal ribosomal protein uS15 family. Part of the 30S ribosomal subunit. Forms a bridge to the 50S subunit in the 70S ribosome, contacting the 23S rRNA.

Its function is as follows. One of the primary rRNA binding proteins, it binds directly to 16S rRNA where it helps nucleate assembly of the platform of the 30S subunit by binding and bridging several RNA helices of the 16S rRNA. Functionally, forms an intersubunit bridge (bridge B4) with the 23S rRNA of the 50S subunit in the ribosome. This chain is Small ribosomal subunit protein uS15, found in Geobacter sulfurreducens (strain ATCC 51573 / DSM 12127 / PCA).